The chain runs to 187 residues: Peptidyl-tRNA hydrolase (187 aa).

A tRNA-binding site is contributed by tyrosine 16. Residue histidine 21 is the Proton acceptor of the active site. Positions 66, 68, and 114 each coordinate tRNA.

This sequence belongs to the PTH family. In terms of assembly, monomer.

It localises to the cytoplasm. It carries out the reaction an N-acyl-L-alpha-aminoacyl-tRNA + H2O = an N-acyl-L-amino acid + a tRNA + H(+). In terms of biological role, hydrolyzes ribosome-free peptidyl-tRNAs (with 1 or more amino acids incorporated), which drop off the ribosome during protein synthesis, or as a result of ribosome stalling. Functionally, catalyzes the release of premature peptidyl moieties from peptidyl-tRNA molecules trapped in stalled 50S ribosomal subunits, and thus maintains levels of free tRNAs and 50S ribosomes. The protein is Peptidyl-tRNA hydrolase of Malacoplasma penetrans (strain HF-2) (Mycoplasma penetrans).